The primary structure comprises 633 residues: Probable methyltransferase PMT15 (633 aa).

The Cytoplasmic segment spans residues 1–24; that stretch reads MGNYRWPSKLSKLSLRAKQTNLYR. The helical; Signal-anchor for type II membrane protein transmembrane segment at 25–45 threads the bilayer; sequence VILIAILCVTFYFVGVWQHSG. Topologically, residues 46–633 are lumenal; sequence RGISRSSISN…APAPDQSSDP (588 aa). Residues Asn-113 and Asn-298 are each glycosylated (N-linked (GlcNAc...) asparagine).

The protein belongs to the methyltransferase superfamily.

The protein resides in the golgi apparatus membrane. The protein is Probable methyltransferase PMT15 of Arabidopsis thaliana (Mouse-ear cress).